The chain runs to 152 residues: Protein-export protein SecB (152 aa).

This sequence belongs to the SecB family. As to quaternary structure, homotetramer, a dimer of dimers. One homotetramer interacts with 1 SecA dimer.

It is found in the cytoplasm. One of the proteins required for the normal export of preproteins out of the cell cytoplasm. It is a molecular chaperone that binds to a subset of precursor proteins, maintaining them in a translocation-competent state. It also specifically binds to its receptor SecA. The protein is Protein-export protein SecB of Rickettsia rickettsii (strain Iowa).